Consider the following 210-residue polypeptide: Coatomer subunit zeta-2 (210 aa).

Residues 1–12 are compositionally biased toward basic and acidic residues; sequence MQRPEAWPRPHP. Residues 1–34 are disordered; it reads MQRPEAWPRPHPGEGAAAAQAGGPAPPARAGEPS. The span at 13-34 shows a compositional bias: low complexity; it reads GEGAAAAQAGGPAPPARAGEPS.

This sequence belongs to the adaptor complexes small subunit family. In terms of assembly, oligomeric complex.

It localises to the cytoplasm. It is found in the endoplasmic reticulum-Golgi intermediate compartment membrane. The protein resides in the golgi apparatus membrane. Its subcellular location is the cytoplasmic vesicle. The protein localises to the COPI-coated vesicle membrane. Functionally, the coatomer is a cytosolic protein complex that binds to dilysine motifs and reversibly associates with Golgi non-clathrin-coated vesicles, which further mediate biosynthetic protein transport from the ER, via the Golgi up to the trans Golgi network. Coatomer complex is required for budding from Golgi membranes, and is essential for the retrograde Golgi-to-ER transport of dilysine-tagged proteins. The zeta subunit may be involved in regulating the coat assembly and, hence, the rate of biosynthetic protein transport due to its association-dissociation properties with the coatomer complex. This Homo sapiens (Human) protein is Coatomer subunit zeta-2 (COPZ2).